A 419-amino-acid chain; its full sequence is L-rhamnose isomerase (419 aa).

The Mn(2+) site is built by His-262, Asp-294, and Asp-296.

It belongs to the rhamnose isomerase family. In terms of assembly, homotetramer. It depends on Mn(2+) as a cofactor.

The protein localises to the cytoplasm. It carries out the reaction L-rhamnopyranose = L-rhamnulose. It participates in carbohydrate degradation; L-rhamnose degradation; glycerone phosphate from L-rhamnose: step 1/3. Its function is as follows. Catalyzes the interconversion of L-rhamnose and L-rhamnulose. The sequence is that of L-rhamnose isomerase from Shigella flexneri.